A 648-amino-acid polypeptide reads, in one-letter code: tRNA 5-methylaminomethyl-2-thiouridine biosynthesis bifunctional protein MnmC (648 aa).

Residues 1–228 are tRNA (mnm(5)s(2)U34)-methyltransferase; it reads MTDRLVPASL…VDDLLVGEYA (228 aa). The interval 252 to 648 is FAD-dependent cmnm(5)s(2)U34 oxidoreductase; the sequence is IGAGLAGCAV…LRARRVGRAG (397 aa).

In the N-terminal section; belongs to the methyltransferase superfamily. tRNA (mnm(5)s(2)U34)-methyltransferase family. It in the C-terminal section; belongs to the DAO family. It depends on FAD as a cofactor.

Its subcellular location is the cytoplasm. It carries out the reaction 5-aminomethyl-2-thiouridine(34) in tRNA + S-adenosyl-L-methionine = 5-methylaminomethyl-2-thiouridine(34) in tRNA + S-adenosyl-L-homocysteine + H(+). In terms of biological role, catalyzes the last two steps in the biosynthesis of 5-methylaminomethyl-2-thiouridine (mnm(5)s(2)U) at the wobble position (U34) in tRNA. Catalyzes the FAD-dependent demodification of cmnm(5)s(2)U34 to nm(5)s(2)U34, followed by the transfer of a methyl group from S-adenosyl-L-methionine to nm(5)s(2)U34, to form mnm(5)s(2)U34. The sequence is that of tRNA 5-methylaminomethyl-2-thiouridine biosynthesis bifunctional protein MnmC from Burkholderia lata (strain ATCC 17760 / DSM 23089 / LMG 22485 / NCIMB 9086 / R18194 / 383).